A 412-amino-acid chain; its full sequence is Phosphoglycerate kinase (412 aa).

Substrate contacts are provided by residues aspartate 24–asparagine 26, arginine 44, histidine 67–arginine 70, arginine 126, and arginine 170. Residues lysine 220, glycine 308, glutamate 339, and glycine 368–serine 371 contribute to the ATP site.

It belongs to the phosphoglycerate kinase family. Monomer.

Its subcellular location is the cytoplasm. It catalyses the reaction (2R)-3-phosphoglycerate + ATP = (2R)-3-phospho-glyceroyl phosphate + ADP. It functions in the pathway carbohydrate degradation; glycolysis; pyruvate from D-glyceraldehyde 3-phosphate: step 2/5. The chain is Phosphoglycerate kinase from Mycobacteroides abscessus (strain ATCC 19977 / DSM 44196 / CCUG 20993 / CIP 104536 / JCM 13569 / NCTC 13031 / TMC 1543 / L948) (Mycobacterium abscessus).